Here is a 189-residue protein sequence, read N- to C-terminus: Molybdenum cofactor guanylyltransferase (189 aa).

GTP-binding positions include 12 to 14, K24, D68, and D94; that span reads LAG. A Mg(2+)-binding site is contributed by D94.

Belongs to the MobA family. In terms of assembly, monomer. Requires Mg(2+) as cofactor.

Its subcellular location is the cytoplasm. It carries out the reaction Mo-molybdopterin + GTP + H(+) = Mo-molybdopterin guanine dinucleotide + diphosphate. In terms of biological role, transfers a GMP moiety from GTP to Mo-molybdopterin (Mo-MPT) cofactor (Moco or molybdenum cofactor) to form Mo-molybdopterin guanine dinucleotide (Mo-MGD) cofactor. The sequence is that of Molybdenum cofactor guanylyltransferase from Xanthomonas euvesicatoria pv. vesicatoria (strain 85-10) (Xanthomonas campestris pv. vesicatoria).